A 594-amino-acid polypeptide reads, in one-letter code: Pre-mRNA-processing protein 45 (594 aa).

Disordered regions lie at residues 36-63, 223-254, 370-426, 498-523, and 566-594; these read TTEY…RKGW, PPRF…TAQD, ETGI…SEMR, AGSS…SKDR, and EQFM…ARDE. Pro residues-rich tracts occupy residues 44–53 and 235–244; these read APLPATPGPQ and PAEPPPPVLQ. The segment covering 383-397 has biased composition (acidic residues); it reads GSEEESDEEEEDEEA. Composition is skewed to basic and acidic residues over residues 398-417, 513-523, and 578-594; these read IRER…KEMR, EGIKEEMSKDR, and RTAE…ARDE.

This sequence belongs to the SNW family. Associated with the spliceosome.

The protein resides in the nucleus. Its function is as follows. Involved in pre-mRNA splicing. The chain is Pre-mRNA-processing protein 45 (PRP45) from Cryptococcus neoformans var. neoformans serotype D (strain B-3501A) (Filobasidiella neoformans).